The following is a 171-amino-acid chain: UPF0398 protein SEQ_1788 (171 aa).

This sequence belongs to the UPF0398 family.

This is UPF0398 protein SEQ_1788 from Streptococcus equi subsp. equi (strain 4047).